Here is a 179-residue protein sequence, read N- to C-terminus: NADH-quinone oxidoreductase subunit B (179 aa).

[4Fe-4S] cluster contacts are provided by cysteine 52, cysteine 53, cysteine 117, and cysteine 147.

It belongs to the complex I 20 kDa subunit family. As to quaternary structure, NDH-1 is composed of 14 different subunits. Subunits NuoB, C, D, E, F, and G constitute the peripheral sector of the complex. The cofactor is [4Fe-4S] cluster.

Its subcellular location is the cell inner membrane. It catalyses the reaction a quinone + NADH + 5 H(+)(in) = a quinol + NAD(+) + 4 H(+)(out). In terms of biological role, NDH-1 shuttles electrons from NADH, via FMN and iron-sulfur (Fe-S) centers, to quinones in the respiratory chain. The immediate electron acceptor for the enzyme in this species is believed to be ubiquinone. Couples the redox reaction to proton translocation (for every two electrons transferred, four hydrogen ions are translocated across the cytoplasmic membrane), and thus conserves the redox energy in a proton gradient. The chain is NADH-quinone oxidoreductase subunit B from Ehrlichia chaffeensis (strain ATCC CRL-10679 / Arkansas).